The chain runs to 146 residues: DNA-directed RNA polymerases II, IV and V subunit 8B (146 aa).

This sequence belongs to the eukaryotic RPB8 RNA polymerase subunit family. As to quaternary structure, component of the RNA polymerase II, IV and V complexes. Associates with the mediator complex.

The protein resides in the nucleus. Functionally, DNA-dependent RNA polymerase catalyzes the transcription of DNA into RNA using the four ribonucleoside triphosphates as substrates. Component of RNA polymerase II which synthesizes mRNA precursors and many functional non-coding RNAs. Pol II is the central component of the basal RNA polymerase II transcription machinery. It is composed of mobile elements that move relative to each other. Component of RNA polymerases IV and V which mediate short-interfering RNAs (siRNA) accumulation and subsequent RNA-directed DNA methylation-dependent (RdDM) transcriptional gene silencing (TGS) of endogenous repeated sequences, including transposable elements. In Arabidopsis thaliana (Mouse-ear cress), this protein is DNA-directed RNA polymerases II, IV and V subunit 8B (NRPB8B).